The chain runs to 461 residues: Protein eva-1 (461 aa).

The first 22 residues, 1-22, serve as a signal peptide directing secretion; sequence MNMHIVSPVLLLFWFGIIVTDG. In terms of domain architecture, SUEL-type lectin spans 55-160; it reads ACDGERITLS…KYLQMAYGCI (106 aa). Residues 370–390 form a helical membrane-spanning segment; sequence VMCIVLAVSMAAIVVLSACII. The disordered stretch occupies residues 397-429; sequence NKDSSRSSRRSRSRRSLETSKLVSSNYGGSITP. Residues 415 to 429 are compositionally biased toward polar residues; that stretch reads TSKLVSSNYGGSITP.

This sequence belongs to the EVA1 family. In terms of assembly, interacts with sax-3. Interacts with slt-1. Interacts (via the SUEL-type lectin domain) with madd-4. Interacts (via the transmembrane domain) with unc-40.

It is found in the cell membrane. Its function is as follows. Acts as a receptor for slt-1. Required for the guidance of the AVM pioneer axon to the ventral nerve cord. Acts as a unc-40 coreceptor to enhance the sensitivity of unc-40 to the madd-4 midline guidance cue to guide muscle arm extensions (muscle arms) and AVM mechanosensory axons towards the dorsoventral midline. The protein is Protein eva-1 (eva-1) of Caenorhabditis elegans.